The chain runs to 425 residues: MTILDDLQWRGLYADCTDLAALTQRLGQGPVTLYCGFDPTADSLHVGNLVPLLALRRFQLHGHHPIALAGGATGMVGDPSGRSAERNLLTPDQVAHNIASIKQQLGRFLDFDATTNPARMVDNSTWTAPISFLEFLRDVGKHFSVNAMLAKESVRARLESESGISYTEFSYMLLQAHDFLHLRETMNCELQVGATDQWGNITAGTDLIRKKLGAPAWGLTFPLLTKSDGTKYGKSTSGAVYLDPKRTTPYRFYQFFVQAEDADVIKLLKVLTFLSAEEITALDTDLKANPGARAAQKALARAVTTLVHGDTECANAIRASEIMFGGGLDGISESLFQDVVGEIPTKELEAAKLSGAGAPLVELLVHAGLAPSKGQARKDIDGGGIYVNNARVGEASRAVTTGELLFGKYLLLRKGKRTYTVVKIV.

Tyr-34 contacts L-tyrosine. Residues 39–48 carry the 'HIGH' region motif; it reads PTADSLHVGN. The L-tyrosine site is built by Tyr-171 and Gln-175. The short motif at 231–235 is the 'KMSKS' region element; the sequence is KYGKS. Residue Lys-234 participates in ATP binding. Residues 358–424 form the S4 RNA-binding domain; the sequence is APLVELLVHA…GKRTYTVVKI (67 aa).

The protein belongs to the class-I aminoacyl-tRNA synthetase family. TyrS type 1 subfamily. As to quaternary structure, homodimer.

Its subcellular location is the cytoplasm. The catalysed reaction is tRNA(Tyr) + L-tyrosine + ATP = L-tyrosyl-tRNA(Tyr) + AMP + diphosphate + H(+). Functionally, catalyzes the attachment of tyrosine to tRNA(Tyr) in a two-step reaction: tyrosine is first activated by ATP to form Tyr-AMP and then transferred to the acceptor end of tRNA(Tyr). In Opitutus terrae (strain DSM 11246 / JCM 15787 / PB90-1), this protein is Tyrosine--tRNA ligase.